The sequence spans 101 residues: Protein mes1 (101 aa).

The span at 1 to 19 shows a compositional bias: basic and acidic residues; it reads MVNTDNKENEPPNMEKAHM. Positions 1-101 are disordered; that stretch reads MVNTDNKENE…RSPNPLLSMR (101 aa).

Interacts with slp1.

The protein localises to the cytoplasm. It is found in the nucleus. Functionally, specifically required for meiosis II (MII). Binds to slp1, an activator of the anapahase promoting complex/cyclcosome (APC/C), and counteracts its function in promoting proteolysis of cdc13. By suppressing the degradation of cdc13 at anaphase I this protein may help maintain a sufficient level of cdc2 kinase activity to complete MII. In Schizosaccharomyces pombe (strain 972 / ATCC 24843) (Fission yeast), this protein is Protein mes1 (mes1).